Consider the following 62-residue polypeptide: Large ribosomal subunit protein bL33 (62 aa).

The protein belongs to the bacterial ribosomal protein bL33 family.

This Azobacteroides pseudotrichonymphae genomovar. CFP2 protein is Large ribosomal subunit protein bL33.